Here is a 229-residue protein sequence, read N- to C-terminus: Cytochrome c oxidase subunit 2 (229 aa).

At 1 to 26 (MSTWANLGLQDSASPLMEQLIFFHDH) the chain is on the mitochondrial intermembrane side. The chain crosses the membrane as a helical span at residues 27-48 (ALLILVMITVLVGYLMVMLFFN). Residues 49-62 (SYVNRFLLHGQLIE) lie on the Mitochondrial matrix side of the membrane. Residues 63-82 (MIWTILPAIILLFIAMPSLR) form a helical membrane-spanning segment. Residues 83–229 (LLYLLDEINE…IKWISDKVNS (147 aa)) lie on the Mitochondrial intermembrane side of the membrane. Cu cation contacts are provided by H161, C196, E198, C200, H204, and M207. Mg(2+) is bound at residue E198.

Belongs to the cytochrome c oxidase subunit 2 family. As to quaternary structure, component of the cytochrome c oxidase (complex IV, CIV), a multisubunit enzyme composed of a catalytic core of 3 subunits and several supernumerary subunits. The complex exists as a monomer or a dimer and forms supercomplexes (SCs) in the inner mitochondrial membrane with ubiquinol-cytochrome c oxidoreductase (cytochrome b-c1 complex, complex III, CIII). Requires Cu cation as cofactor.

It localises to the mitochondrion inner membrane. The catalysed reaction is 4 Fe(II)-[cytochrome c] + O2 + 8 H(+)(in) = 4 Fe(III)-[cytochrome c] + 2 H2O + 4 H(+)(out). In terms of biological role, component of the cytochrome c oxidase, the last enzyme in the mitochondrial electron transport chain which drives oxidative phosphorylation. The respiratory chain contains 3 multisubunit complexes succinate dehydrogenase (complex II, CII), ubiquinol-cytochrome c oxidoreductase (cytochrome b-c1 complex, complex III, CIII) and cytochrome c oxidase (complex IV, CIV), that cooperate to transfer electrons derived from NADH and succinate to molecular oxygen, creating an electrochemical gradient over the inner membrane that drives transmembrane transport and the ATP synthase. Cytochrome c oxidase is the component of the respiratory chain that catalyzes the reduction of oxygen to water. Electrons originating from reduced cytochrome c in the intermembrane space (IMS) are transferred via the dinuclear copper A center (CU(A)) of subunit 2 and heme A of subunit 1 to the active site in subunit 1, a binuclear center (BNC) formed by heme A3 and copper B (CU(B)). The BNC reduces molecular oxygen to 2 water molecules using 4 electrons from cytochrome c in the IMS and 4 protons from the mitochondrial matrix. This chain is Cytochrome c oxidase subunit 2 (mt:CoII), found in Drosophila subobscura (Fruit fly).